Consider the following 183-residue polypeptide: MKQFIEFIPLIVFFAVYKFYDIYMATGALVVVTGLQLAYSWIRYRKVEKMQLFTFLLVGFFGGLTVFFHDDTFIKWKVTVINVLFALGLLISRYGFGKNLIKQMLGKELQAPDPVWDRVNLGWAGFFTVCGLLNLYVAFNLPQEMWVNFKVFGLLGMTLVFTLLSGVYLYRHLPAEQKNEMKK.

5 helical membrane-spanning segments follow: residues 4–24 (FIEF…DIYM), 50–70 (MQLF…FFHD), 72–92 (TFIK…LLIS), 119–139 (VNLG…YVAF), and 149–169 (FKVF…GVYL).

This sequence belongs to the YciB family.

It is found in the cell inner membrane. Plays a role in cell envelope biogenesis, maintenance of cell envelope integrity and membrane homeostasis. This is Inner membrane-spanning protein YciB from Aeromonas hydrophila subsp. hydrophila (strain ATCC 7966 / DSM 30187 / BCRC 13018 / CCUG 14551 / JCM 1027 / KCTC 2358 / NCIMB 9240 / NCTC 8049).